Reading from the N-terminus, the 179-residue chain is Large ribosomal subunit protein uL5 (179 aa).

The protein belongs to the universal ribosomal protein uL5 family. As to quaternary structure, part of the 50S ribosomal subunit; part of the 5S rRNA/L5/L18/L25 subcomplex. Contacts the 5S rRNA and the P site tRNA. Forms a bridge to the 30S subunit in the 70S ribosome.

Functionally, this is one of the proteins that bind and probably mediate the attachment of the 5S RNA into the large ribosomal subunit, where it forms part of the central protuberance. In the 70S ribosome it contacts protein S13 of the 30S subunit (bridge B1b), connecting the 2 subunits; this bridge is implicated in subunit movement. Contacts the P site tRNA; the 5S rRNA and some of its associated proteins might help stabilize positioning of ribosome-bound tRNAs. The sequence is that of Large ribosomal subunit protein uL5 from Saccharophagus degradans (strain 2-40 / ATCC 43961 / DSM 17024).